The primary structure comprises 160 residues: Major pollen allergen Bet v 1-A (160 aa).

Residues K55, Y82, Y84, and N101 each coordinate brassinolide.

This sequence belongs to the BetVI family.

It localises to the cytoplasm. In terms of biological role, may be a general steroid carrier protein. This Betula pendula (European white birch) protein is Major pollen allergen Bet v 1-A (BETVIA).